The chain runs to 336 residues: 3-isopropylmalate dehydrogenase (336 aa).

R87, R97, R121, and D211 together coordinate substrate. D211, D235, and D239 together coordinate Mg(2+). Position 271-283 (271-283 (GSAPDIAGQGIAD)) interacts with NAD(+).

The protein belongs to the isocitrate and isopropylmalate dehydrogenases family. LeuB type 2 subfamily. In terms of assembly, homodimer. Mg(2+) serves as cofactor. Mn(2+) is required as a cofactor.

The protein resides in the cytoplasm. The catalysed reaction is (2R,3S)-3-isopropylmalate + NAD(+) = 4-methyl-2-oxopentanoate + CO2 + NADH. Its pathway is amino-acid biosynthesis; L-leucine biosynthesis; L-leucine from 3-methyl-2-oxobutanoate: step 3/4. Functionally, catalyzes the oxidation of 3-carboxy-2-hydroxy-4-methylpentanoate (3-isopropylmalate) to 3-carboxy-4-methyl-2-oxopentanoate. The product decarboxylates to 4-methyl-2 oxopentanoate. This chain is 3-isopropylmalate dehydrogenase, found in Rhodococcus opacus (strain B4).